The sequence spans 370 residues: F-box protein At3g20690 (370 aa).

Residues 1–45 (MMMSDLPHDLVEEILSRLPLISLKAMRSTCKTWNVLSKHRSFANK) enclose the F-box domain.

The protein is F-box protein At3g20690 of Arabidopsis thaliana (Mouse-ear cress).